A 173-amino-acid chain; its full sequence is Adenine phosphoribosyltransferase (173 aa).

Belongs to the purine/pyrimidine phosphoribosyltransferase family. Homodimer.

Its subcellular location is the cytoplasm. It carries out the reaction AMP + diphosphate = 5-phospho-alpha-D-ribose 1-diphosphate + adenine. The protein operates within purine metabolism; AMP biosynthesis via salvage pathway; AMP from adenine: step 1/1. In terms of biological role, catalyzes a salvage reaction resulting in the formation of AMP, that is energically less costly than de novo synthesis. The sequence is that of Adenine phosphoribosyltransferase from Thermoanaerobacter sp. (strain X514).